A 509-amino-acid polypeptide reads, in one-letter code: 5-hydroxytryptamine receptor (509 aa).

Residues 1–99 (MANFTFGDLA…YSHEHLVLTS (99 aa)) are Extracellular-facing. Asn-3, Asn-47, Asn-58, Asn-68, Asn-72, and Asn-78 each carry an N-linked (GlcNAc...) asparagine glycan. A helical transmembrane segment spans residues 100-122 (VILGLFVLCCIIGNCFVIAAVML). Residues 123-132 (ERSLHNVANY) are Cytoplasmic-facing. A helical transmembrane segment spans residues 133 to 154 (LILSLAVADLMVAVLVMPLSVV). Residues 155-169 (SEISKVWFLHSEVCD) are Extracellular-facing. The cysteines at positions 168 and 246 are disulfide-linked. The helical transmembrane segment at 170-191 (MWISVDVLCCTASILHLVAIAM) threads the bilayer. At 192–210 (DRYWAVTSIDYIRRRSARR) the chain is on the cytoplasmic side. Residues 211-233 (ILLMIMVVWIVALFISIPPLFGW) form a helical membrane-spanning segment. Residues 234 to 259 (RDPNNDPDKTGTCIISQDKGYTIFST) lie on the Extracellular side of the membrane. The chain crosses the membrane as a helical span at residues 260–281 (VGAFYLPMLVMMIIYIRIWLVA). Residues 282–432 (RSRIRKDKFQ…LKRERKAART (151 aa)) are Cytoplasmic-facing. The disordered stretch occupies residues 323-372 (SPDSTTEKKKRRAPFKSYGCSPRPERKKNRAKKLPENANGVNSNSSSSER). Residues 433 to 456 (LAIITGAFLICWLPFFIIALIGPF) form a helical membrane-spanning segment. The Extracellular segment spans residues 457–465 (VDPEGIPPF). Residues 466-488 (ARSFVLWLGYFNSLLNPIIYTIF) form a helical membrane-spanning segment. Residues 489 to 509 (SPEFRSAFQKILFGKYRRGHR) are Cytoplasmic-facing.

The protein belongs to the G-protein coupled receptor 1 family.

The protein resides in the cell membrane. Functionally, this is a receptor for 5-hydroxytryptamine (serotonin), a biogenic hormone that function as a neurotransmitter, a hormone, and a mitogen. The protein is 5-hydroxytryptamine receptor of Lymnaea stagnalis (Great pond snail).